A 225-amino-acid polypeptide reads, in one-letter code: Cyclin-dependent kinase inhibitor 3 (225 aa).

2 disordered regions span residues 47–94 (AAAA…QRRR) and 130–169 (ERKSLKPNSCSREVAAEHAGEHKHNPAAAAAAGRRPPLSP). Basic residues predominate over residues 55-67 (CRRRHRRGGRRGC). The span at 71–82 (GAGSARACGARS) shows a compositional bias: low complexity. Residues 143–153 (VAAEHAGEHKH) are compositionally biased toward basic and acidic residues.

The protein belongs to the CDI family. ICK/KRP subfamily.

The sequence is that of Cyclin-dependent kinase inhibitor 3 (KRP3) from Oryza sativa subsp. japonica (Rice).